A 115-amino-acid chain; its full sequence is Phosphoribosyl-ATP pyrophosphatase (115 aa).

Belongs to the PRA-PH family.

It is found in the cytoplasm. The catalysed reaction is 1-(5-phospho-beta-D-ribosyl)-ATP + H2O = 1-(5-phospho-beta-D-ribosyl)-5'-AMP + diphosphate + H(+). Its pathway is amino-acid biosynthesis; L-histidine biosynthesis; L-histidine from 5-phospho-alpha-D-ribose 1-diphosphate: step 2/9. The sequence is that of Phosphoribosyl-ATP pyrophosphatase from Saccharophagus degradans (strain 2-40 / ATCC 43961 / DSM 17024).